The following is a 136-amino-acid chain: Large-conductance mechanosensitive channel (136 aa).

Transmembrane regions (helical) follow at residues 10-30 (FAMRGNVVDLAVGVIIGAAFG) and 76-96 (GVFIQNVFDFLIVAFAIFMAI).

The protein belongs to the MscL family. In terms of assembly, homopentamer.

The protein localises to the cell inner membrane. Channel that opens in response to stretch forces in the membrane lipid bilayer. May participate in the regulation of osmotic pressure changes within the cell. The polypeptide is Large-conductance mechanosensitive channel (Shigella boydii serotype 18 (strain CDC 3083-94 / BS512)).